Consider the following 962-residue polypeptide: Nonsense-mediated mRNA decay factor SMG8 (962 aa).

The tract at residues 634–661 (RSPEISSQIASSGLSSRSNSTSSGTSSA) is disordered. The segment covering 639 to 661 (SSQIASSGLSSRSNSTSSGTSSA) has biased composition (low complexity).

Belongs to the SMG8 family.

Functionally, involved in nonsense-mediated decay (NMD) of mRNAs containing premature stop codons. Probable component of kinase complex containing nonC and recruited to stalled ribosomes. This is Nonsense-mediated mRNA decay factor SMG8 from Drosophila virilis (Fruit fly).